The following is a 305-amino-acid chain: GMP synthase [glutamine-hydrolyzing] subunit B (305 aa).

The 183-residue stretch at 2–184 folds into the GMPS ATP-PPase domain; that stretch reads VNIEKFIDQA…LGLPAEIQHR (183 aa). Residue 29–35 participates in ATP binding; the sequence is SGGVDSS.

In terms of assembly, heterodimer composed of a glutamine amidotransferase subunit (A) and a GMP-binding subunit (B).

It catalyses the reaction XMP + L-glutamine + ATP + H2O = GMP + L-glutamate + AMP + diphosphate + 2 H(+). It participates in purine metabolism; GMP biosynthesis; GMP from XMP (L-Gln route): step 1/1. Catalyzes the synthesis of GMP from XMP. The sequence is that of GMP synthase [glutamine-hydrolyzing] subunit B from Methanoculleus marisnigri (strain ATCC 35101 / DSM 1498 / JR1).